We begin with the raw amino-acid sequence, 74 residues long: Protein SlyX homolog (74 aa).

This sequence belongs to the SlyX family.

The sequence is that of Protein SlyX homolog from Aliivibrio salmonicida (strain LFI1238) (Vibrio salmonicida (strain LFI1238)).